Consider the following 403-residue polypeptide: MTESTFPQYPRLVLSKGREKSLLRRHPWVFSGAVSRLEGKANLGETIDIVDHQGKWLARGAWSPASQIRARVWTFDKAESIDIAFFTHRLRQAQQWRDWLAKKDGLDSYRLIAGESDGLPGVTIDRFGHFLVLQLLSAGAEYQRAALISALQTCDPDCAIYDRSDVAVRKKEGMALTQGPVTGELPPALLPIEEHGMKLLVDIQGGHKTGYYLDQRDSRLATRRYVENQRVLNCFSYTGGFAVSALMGGCRQVVSVDTSQDALDIARQNVELNQLDLSKAEFVRDDVFKLLRAYREHGEKFDVIIMDPPKFVENKSQLMGACRGYKDINMLAIQLLNPGGILLTFSCSGLMTSDLFQKIIADAAIDAGRDVQFIEQFRQAADHPVIATYPEGLYLKGFACRVM.

The PUA domain occupies 9–86 (YPRLVLSKGR…KAESIDIAFF (78 aa)).

Belongs to the methyltransferase superfamily. RlmI family.

It is found in the cytoplasm. The enzyme catalyses cytidine(1962) in 23S rRNA + S-adenosyl-L-methionine = 5-methylcytidine(1962) in 23S rRNA + S-adenosyl-L-homocysteine + H(+). Its function is as follows. Specifically methylates the cytosine at position 1962 (m5C1962) of 23S rRNA. The protein is Ribosomal RNA large subunit methyltransferase I of Salmonella gallinarum (strain 287/91 / NCTC 13346).